A 324-amino-acid polypeptide reads, in one-letter code: tRNA-modifying protein YgfZ (324 aa).

Trp-184 lines the folate pocket.

The protein belongs to the tRNA-modifying YgfZ family.

It localises to the cytoplasm. Functionally, folate-binding protein involved in regulating the level of ATP-DnaA and in the modification of some tRNAs. It is probably a key factor in regulatory networks that act via tRNA modification, such as initiation of chromosomal replication. The polypeptide is tRNA-modifying protein YgfZ (Vibrio vulnificus (strain CMCP6)).